The following is a 132-amino-acid chain: DNA-directed RNA polymerase subunit omega (132 aa).

This sequence belongs to the RNA polymerase subunit omega family. In terms of assembly, the RNAP catalytic core consists of 2 alpha, 1 beta, 1 beta' and 1 omega subunit. When a sigma factor is associated with the core the holoenzyme is formed, which can initiate transcription.

It carries out the reaction RNA(n) + a ribonucleoside 5'-triphosphate = RNA(n+1) + diphosphate. Promotes RNA polymerase assembly. Latches the N- and C-terminal regions of the beta' subunit thereby facilitating its interaction with the beta and alpha subunits. This Ehrlichia ruminantium (strain Welgevonden) protein is DNA-directed RNA polymerase subunit omega.